The primary structure comprises 156 residues: Protein CURVATURE THYLAKOID 1C, chloroplastic (156 aa).

The N-terminal 55 residues, M1–K55, are a transit peptide targeting the chloroplast. Residues A56–R83 lie on the Stromal side of the membrane. The helical transmembrane segment at L84–I104 threads the bilayer. The Lumenal segment spans residues T105–K109. The chain crosses the membrane as a helical span at residues L110–Y130. The Stromal segment spans residues R131 to Q156.

This sequence belongs to the CURT family. In terms of assembly, homo- and heterodimers and trimers. Interacts with PSAD2.

The protein resides in the plastid. It localises to the chloroplast thylakoid membrane. Functionally, determines thylakoid architecture by inducing membrane curvature. The chain is Protein CURVATURE THYLAKOID 1C, chloroplastic (CURT1C) from Arabidopsis thaliana (Mouse-ear cress).